The chain runs to 429 residues: Ribosomal RNA small subunit methyltransferase B (429 aa).

S-adenosyl-L-methionine-binding positions include 254–260 (CAAPGGK), Asp-277, Asp-303, and Asp-322. The Nucleophile role is filled by Cys-375.

The protein belongs to the class I-like SAM-binding methyltransferase superfamily. RsmB/NOP family.

The protein resides in the cytoplasm. It carries out the reaction cytidine(967) in 16S rRNA + S-adenosyl-L-methionine = 5-methylcytidine(967) in 16S rRNA + S-adenosyl-L-homocysteine + H(+). Its function is as follows. Specifically methylates the cytosine at position 967 (m5C967) of 16S rRNA. The sequence is that of Ribosomal RNA small subunit methyltransferase B from Erwinia tasmaniensis (strain DSM 17950 / CFBP 7177 / CIP 109463 / NCPPB 4357 / Et1/99).